Here is a 107-residue protein sequence, read N- to C-terminus: MSITLSDSAAARVNIFLANRGKGFGLRLGVRTSGCSGMAYVLEFVDEPMAEDTVFEDKGVKVVVDGKSLQFLDGTQLDFVKEGLNEGFKFSNPNVKDECGCGESFHV.

Residues cysteine 35, cysteine 99, and cysteine 101 each coordinate Fe cation.

Belongs to the HesB/IscA family. Homodimer; may form tetramers and higher multimers. Requires Fe cation as cofactor.

In terms of biological role, is able to transfer iron-sulfur clusters to apo-ferredoxin. Multiple cycles of [2Fe2S] cluster formation and transfer are observed, suggesting that IscA acts catalytically. Recruits intracellular free iron so as to provide iron for the assembly of transient iron-sulfur cluster in IscU in the presence of IscS, L-cysteine and the thioredoxin reductase system TrxA/TrxB. This is Iron-binding protein IscA from Salmonella newport (strain SL254).